The sequence spans 146 residues: Large ribosomal subunit protein bL21 (146 aa).

Residues 95-104 (PKKKTRRKMG) are compositionally biased toward basic residues. The disordered stretch occupies residues 95-146 (PKKKTRRKMGHRQELTRVMVKSISISKSTPKSSPKTEATKKSTSSKASKPEN). The segment covering 115–146 (KSISISKSTPKSSPKTEATKKSTSSKASKPEN) has biased composition (low complexity).

Belongs to the bacterial ribosomal protein bL21 family. Part of the 50S ribosomal subunit. Contacts protein L20.

Its function is as follows. This protein binds to 23S rRNA in the presence of protein L20. The chain is Large ribosomal subunit protein bL21 from Prochlorococcus marinus (strain MIT 9515).